The primary structure comprises 280 residues: Energy-coupling factor transporter ATP-binding protein EcfA1 (280 aa).

An ABC transporter domain is found at 6–241; it reads LRTENISFQY…SHMLQEIGLD (236 aa). 40-47 lines the ATP pocket; that stretch reads GQNGSGKS.

This sequence belongs to the ABC transporter superfamily. Energy-coupling factor EcfA family. As to quaternary structure, forms a stable energy-coupling factor (ECF) transporter complex composed of 2 membrane-embedded substrate-binding proteins (S component), 2 ATP-binding proteins (A component) and 2 transmembrane proteins (T component).

The protein localises to the cell membrane. In terms of biological role, ATP-binding (A) component of a common energy-coupling factor (ECF) ABC-transporter complex. Unlike classic ABC transporters this ECF transporter provides the energy necessary to transport a number of different substrates. The chain is Energy-coupling factor transporter ATP-binding protein EcfA1 from Bacillus thuringiensis subsp. konkukian (strain 97-27).